The following is a 145-amino-acid chain: uncharacterized protein (145 aa).

Residues 78 to 145 enclose the ACT domain; it reads KLQIVAKDRI…DVVEKISILW (68 aa).

This is an uncharacterized protein from Methanocaldococcus jannaschii (strain ATCC 43067 / DSM 2661 / JAL-1 / JCM 10045 / NBRC 100440) (Methanococcus jannaschii).